The chain runs to 446 residues: Transcriptional regulator STERILE APETALA (446 aa).

Residues 1–10 (MSTSSSSSDN) are compositionally biased toward low complexity. Residues 1 to 32 (MSTSSSSSDNGAGGSGGVFEAPSPSRPRRGAN) form a disordered region.

Expressed in inflorescence and floral meristems, young floral organ primordia, and later in ovule primordia.

It localises to the nucleus. Its function is as follows. Transcriptional regulator involved in the specification of floral identity. Acts as A class cadastral protein by repressing the C class floral homeotic gene AGAMOUS in the external flower organs in association with APETALA2 and other repressors. Is required to maintain floral meristem identity in concert with AGAMOUS. Also interacts with APETALA2 to ensure the normal development of ovule. This Arabidopsis thaliana (Mouse-ear cress) protein is Transcriptional regulator STERILE APETALA (SAP).